Reading from the N-terminus, the 113-residue chain is Iron-sulfur cluster insertion protein ErpA (113 aa).

Iron-sulfur cluster contacts are provided by Cys41, Cys105, and Cys107.

It belongs to the HesB/IscA family. Homodimer. It depends on iron-sulfur cluster as a cofactor.

Functionally, required for insertion of 4Fe-4S clusters for at least IspG. This is Iron-sulfur cluster insertion protein ErpA from Photobacterium profundum (strain SS9).